Reading from the N-terminus, the 379-residue chain is 1-deoxy-D-xylulose 5-phosphate reductoisomerase (379 aa).

6 residues coordinate NADPH: threonine 10, glycine 11, serine 12, isoleucine 13, asparagine 39, and asparagine 121. 1-deoxy-D-xylulose 5-phosphate is bound at residue lysine 122. An NADPH-binding site is contributed by glutamate 123. Mn(2+) is bound at residue aspartate 147. Serine 148, glutamate 149, serine 173, and histidine 196 together coordinate 1-deoxy-D-xylulose 5-phosphate. Glutamate 149 provides a ligand contact to Mn(2+). Glycine 202 lines the NADPH pocket. The 1-deoxy-D-xylulose 5-phosphate site is built by serine 209, asparagine 214, lysine 215, and glutamate 218. Glutamate 218 contributes to the Mn(2+) binding site.

Belongs to the DXR family. Requires Mg(2+) as cofactor. It depends on Mn(2+) as a cofactor.

It carries out the reaction 2-C-methyl-D-erythritol 4-phosphate + NADP(+) = 1-deoxy-D-xylulose 5-phosphate + NADPH + H(+). It participates in isoprenoid biosynthesis; isopentenyl diphosphate biosynthesis via DXP pathway; isopentenyl diphosphate from 1-deoxy-D-xylulose 5-phosphate: step 1/6. Catalyzes the NADPH-dependent rearrangement and reduction of 1-deoxy-D-xylulose-5-phosphate (DXP) to 2-C-methyl-D-erythritol 4-phosphate (MEP). This Chlamydia pneumoniae (Chlamydophila pneumoniae) protein is 1-deoxy-D-xylulose 5-phosphate reductoisomerase.